The sequence spans 89 residues: Probable monothiol glutaredoxin GrlA (89 aa).

The 89-residue stretch at 1–89 (MLYMKGTPKM…EPMLRDAVAA (89 aa)) folds into the Glutaredoxin domain. Lys5 provides a ligand contact to glutathione. Residue Cys13 participates in [2Fe-2S] cluster binding. Glutathione-binding positions include Arg42, Phe54, and 67-68 (SD).

Belongs to the glutaredoxin family. Monothiol subfamily.

The chain is Probable monothiol glutaredoxin GrlA (grlA) from Legionella pneumophila subsp. pneumophila (strain Philadelphia 1 / ATCC 33152 / DSM 7513).